The following is a 338-amino-acid chain: Acyl-CoA-binding domain-containing protein 1 (338 aa).

A helical; Signal-anchor transmembrane segment spans residues isoleucine 11 to phenylalanine 31. Asparagine 35 and asparagine 41 each carry an N-linked (GlcNAc...) asparagine glycan. A disordered region spans residues alanine 69 to valine 89. Over residues aspartate 77–valine 89 the composition is skewed to acidic residues. Residues leucine 94–glutamate 184 enclose the ACB domain. Residues tyrosine 126–lysine 130, lysine 152, and tyrosine 171 each bind an acyl-CoA. Residue asparagine 191 is glycosylated (N-linked (GlcNAc...) asparagine). ANK repeat units follow at residues leucine 217 to alanine 246, glutamate 250 to alanine 279, glutamate 283 to isoleucine 312, and aspartate 316 to asparagine 338.

The protein belongs to the ACBP family. As to quaternary structure, interacts with RAP2-12. Binds to SMO1-1 and SMO1-2. Glycosylated. In seeds, localized in the outer integument. As to expression, expressed at low levels in roots, stems, leaves, flowers, and siliques, especially within seeds.

The protein resides in the cell membrane. It is found in the secreted. Its subcellular location is the cell wall. The protein localises to the endoplasmic reticulum membrane. In terms of biological role, binds medium- and long-chain acyl-CoA esters with very high affinity. Can interact in vitro with arachidonyl-CoA, barely with oleoyl-CoA, but not with palmitoyl-CoA. Confers tolerance and binds to lead ions Pb(2+), probably by promoting lead translocation from roots to shoots. May function as an intracellular carrier of acyl-CoA esters. Modulates negatively sterol synthesis during embryogenesis and gametophytes development via interactions with SMO1-1 and SMO1-2; sterols serve as lipid modulators for gene expression of homeodomain-leucine zipper IV transcription factors. This Arabidopsis thaliana (Mouse-ear cress) protein is Acyl-CoA-binding domain-containing protein 1.